The primary structure comprises 1065 residues: Ceruloplasmin (1065 aa).

Positions 1–19 (MKILILGIFLFLCSTPAWA) are cleaved as a signal peptide. Plastocyanin-like domains are found at residues 20–200 (KEKH…LIIC) and 209–357 (KEKH…VQEC). Positions 55, 64, and 67 each coordinate Na(+). Residues H120 and H122 each contribute to the Cu(2+) site. H120 lines the O2 pocket. A Ca(2+)-binding site is contributed by K128. An N-linked (GlcNAc...) (complex) asparagine glycan is attached at N138. Ca(2+) is bound by residues Q143, D146, and D147. Residues C174 and C200 are joined by a disulfide bond. Cu(2+) contacts are provided by H180 and H182. H180 lines the O2 pocket. Residue S256 coordinates Na(+). A disulfide bridge links C276 with C357. Cu(2+) contacts are provided by H295, C338, and H343. Residues N358 and N397 are each glycosylated (N-linked (GlcNAc...) (complex) asparagine). 2 Plastocyanin-like domains span residues 370–560 (HVRH…MKIC) and 570–718 (RQKD…VNQC). F408, G417, and Y420 together coordinate Na(+). A disulfide bridge connects residues C534 and C560. N-linked (GlcNAc...) asparagine glycosylation is present at N588. Position 617 (S617) interacts with Na(+). Cysteines 637 and 718 form a disulfide. Positions 656, 699, 704, and 709 each coordinate Cu(2+). C699 functions as the Nucleophile; for glutathione peroxidase activity in the catalytic mechanism. S722 carries the phosphoserine; by FAM20C modification. Plastocyanin-like domains are found at residues 730 to 900 (GERT…LIVC) and 908 to 1061 (FNPR…QNED). The N-linked (GlcNAc...) (complex) asparagine glycan is linked to N762. Na(+) contacts are provided by F767, G776, and Y779. The cysteines at positions 874 and 900 are disulfide-linked. N926 carries N-linked (GlcNAc...) asparagine glycosylation. Residue S955 coordinates Na(+). The Cu(2+) site is built by H994, H997, H999, H1039, C1040, H1041, H1045, and M1050. H997 and H999 together coordinate O2. H1041 is a binding site for O2.

This sequence belongs to the multicopper oxidase family. As to quaternary structure, found in a complex with MPO and LTF; interacts directly with MPO and LTF, which allows Fe(3+) incorporation into LTF, activation of CP ferroxidase activity and protection of CP antioxidant properties by MPO. Requires Cu(2+) as cofactor. As to expression, expressed by the liver and secreted in plasma.

The protein resides in the secreted. The enzyme catalyses 4 Fe(2+) + O2 + 4 H(+) = 4 Fe(3+) + 2 H2O. The catalysed reaction is 4 Cu(+) + O2 + 4 H(+) = 4 Cu(2+) + 2 H2O. It carries out the reaction a hydroperoxide + 2 glutathione = an alcohol + glutathione disulfide + H2O. It catalyses the reaction 4 nitric oxide + O2 + 2 H2O = 4 nitrite + 4 H(+). The enzyme catalyses 2 glutathione + H2O2 = glutathione disulfide + 2 H2O. In terms of biological role, multifunctional blue, copper-binding (6-7 atoms per molecule) glycoprotein. It has ferroxidase activity oxidizing Fe(2+) to Fe(3+) without releasing radical oxygen species. It is involved in iron transport across the cell membrane. Copper ions provide a large number of enzymatic activites. Oxidizes highly toxic ferrous ions to the ferric state for further incorporation onto apo-transferrins, catalyzes Cu(+) oxidation and promotes the oxidation of biogenic amines such as norepinephrin and serotonin. Provides Cu(2+) ions for the ascorbate-mediated deaminase degradation of the heparan sulfate chains of GPC1. Has glutathione peroxidase-like activity, can remove both hydrogen peroxide and lipid hydroperoxide in the presence of thiols. Also shows NO-oxidase and NO2 synthase activities that determine endocrine NO homeostasis. The chain is Ceruloplasmin from Homo sapiens (Human).